A 126-amino-acid chain; its full sequence is Histone H2B.5 (126 aa).

Residues 1–27 (MAPKAEKKPSEKAPKADKKITKEGGSE) are compositionally biased toward basic and acidic residues. Residues 1–34 (MAPKAEKKPSEKAPKADKKITKEGGSERKKKTKK) form a disordered region. At Ala2 the chain carries N,N,N-trimethylalanine; alternate. Position 2 is a n,N-dimethylalanine; alternate (Ala2). Ala2 carries the post-translational modification N-methylalanine; alternate. Lys4 is modified (N6-methyllysine). N6-acetyllysine occurs at positions 7, 12, 18, and 19. Lys122 is covalently cross-linked (Glycyl lysine isopeptide (Lys-Gly) (interchain with G-Cter in ubiquitin)).

Belongs to the histone H2B family. In terms of assembly, the nucleosome is a histone octamer containing two molecules each of H2A, H2B, H3 and H4 assembled in one H3-H4 heterotetramer and two H2A-H2B heterodimers. The octamer wraps approximately 147 bp of DNA. Post-translationally, can be acetylated to form H2BK6ac, H2BK33ac and H2BK34ac. In terms of processing, monoubiquitinated by BRE1 to form H2BK143ub1 and deubiquitinated by UBP26. Required for heterochromatic histone H3 di- and trimethylation at H3K4me. May give a specific tag for epigenetic transcriptional activation.

Its subcellular location is the nucleus. The protein localises to the chromosome. Functionally, core component of nucleosome. Nucleosomes wrap and compact DNA into chromatin, limiting DNA accessibility to the cellular machineries which require DNA as a template. Histones thereby play a central role in transcription regulation, DNA repair, DNA replication and chromosomal stability. DNA accessibility is regulated via a complex set of post-translational modifications of histones, also called histone code, and nucleosome remodeling. The protein is Histone H2B.5 of Arabidopsis thaliana (Mouse-ear cress).